Here is a 216-residue protein sequence, read N- to C-terminus: Orotate phosphoribosyltransferase (216 aa).

5-phospho-alpha-D-ribose 1-diphosphate is bound at residue Lys30. 38–39 (FF) is an orotate binding site. 5-phospho-alpha-D-ribose 1-diphosphate is bound by residues 75–76 (YK), Arg102, Lys103, Lys106, His108, and 128–136 (DDVITAGTA). Positions 132 and 160 each coordinate orotate.

The protein belongs to the purine/pyrimidine phosphoribosyltransferase family. PyrE subfamily. In terms of assembly, homodimer. Mg(2+) is required as a cofactor.

It carries out the reaction orotidine 5'-phosphate + diphosphate = orotate + 5-phospho-alpha-D-ribose 1-diphosphate. Its pathway is pyrimidine metabolism; UMP biosynthesis via de novo pathway; UMP from orotate: step 1/2. Functionally, catalyzes the transfer of a ribosyl phosphate group from 5-phosphoribose 1-diphosphate to orotate, leading to the formation of orotidine monophosphate (OMP). This Acinetobacter baumannii (strain ATCC 17978 / DSM 105126 / CIP 53.77 / LMG 1025 / NCDC KC755 / 5377) protein is Orotate phosphoribosyltransferase.